We begin with the raw amino-acid sequence, 388 residues long: Putative F-box protein At3g17490 (388 aa).

The region spanning 1–46 (MMMPHLSEDLVEEILSRVPAISLKRLRYTCKQWNALFNDQRFSKKH) is the F-box domain.

This is Putative F-box protein At3g17490 from Arabidopsis thaliana (Mouse-ear cress).